Reading from the N-terminus, the 84-residue chain is Alpha-like toxin BmK M1 (84 aa).

The signal sequence occupies residues 1–19; the sequence is MNYLVMISFALLLMTGVES. An LCN-type CS-alpha/beta domain is found at 21–83; that stretch reads RDAYIAKPHN…VPIRVPGKCH (63 aa). 4 cysteine pairs are disulfide-bonded: cysteine 31/cysteine 82, cysteine 35/cysteine 55, cysteine 41/cysteine 65, and cysteine 45/cysteine 67. Position 84 (arginine 84) is a propeptide, removed by a carboxypeptidase.

Belongs to the long (4 C-C) scorpion toxin superfamily. Sodium channel inhibitor family. Alpha subfamily. As to expression, expressed by the venom gland.

Its subcellular location is the secreted. Its function is as follows. Alpha toxins bind voltage-independently at site-3 of sodium channels (Nav) and inhibit the inactivation of the activated channels thereby blocking neuronal transmission. This toxin is active against both mammals and insects, and is classified as an alpha-like toxin. It is active on Nav1.2/SCN2A (EC(50)=139-252 nM), Nav1.3/SCN3A (EC(50)=565 nM), Nav1.4/SCN4A and Nav1.5/SCN5A (EC(50)=195-500 nM), Nav1.6/SCN8A (EC(50)=214 nM), and drosophila DmNav1 (EC(50)=30 nM). In mNav1.6/SCN8A, the toxin induces a large increase in both transient and persistent currents, which correlates with a prominent reduction in the fast component of inactivating current. In rNav1.2/SCN2A and rNav1.3/SCN3A, toxin-increased currents is much smaller. Moreover, the toxin only accelerates the slow inactivation development and delay recovery of mNav1.6/SCN8A through binding to the channel in the open state. Is 6-fold more toxic than BmK-M2. In vivo, intrahippocampal injection into rat induces epileptiform responses. In addition, intraplantar injection into rat induces spontaneous nociception and hyperalgesia. The protein is Alpha-like toxin BmK M1 of Olivierus martensii (Manchurian scorpion).